Consider the following 438-residue polypeptide: Histidinol dehydrogenase (438 aa).

NAD(+) contacts are provided by Tyr-137, Gln-198, and Asn-221. Residues Ser-244, Gln-266, and His-269 each contribute to the substrate site. The Zn(2+) site is built by Gln-266 and His-269. Residues Glu-334 and His-335 each act as proton acceptor in the active site. The substrate site is built by His-335, Asp-368, Glu-422, and His-427. Asp-368 lines the Zn(2+) pocket. His-427 provides a ligand contact to Zn(2+).

It belongs to the histidinol dehydrogenase family. It depends on Zn(2+) as a cofactor.

The enzyme catalyses L-histidinol + 2 NAD(+) + H2O = L-histidine + 2 NADH + 3 H(+). The protein operates within amino-acid biosynthesis; L-histidine biosynthesis; L-histidine from 5-phospho-alpha-D-ribose 1-diphosphate: step 9/9. Its function is as follows. Catalyzes the sequential NAD-dependent oxidations of L-histidinol to L-histidinaldehyde and then to L-histidine. The sequence is that of Histidinol dehydrogenase from Aromatoleum aromaticum (strain DSM 19018 / LMG 30748 / EbN1) (Azoarcus sp. (strain EbN1)).